Consider the following 450-residue polypeptide: Sorting nexin-4 (450 aa).

Residue Met1 is modified to N-acetylmethionine. Residues 1–46 are disordered; the sequence is MEQAPPDPERQLQPAPLEPLGSPDAGLGAAVGKEAEGAGEESSGVD. Ser22 is modified (phosphoserine). The 127-residue stretch at 61 to 187 folds into the PX domain; sequence SVSEAEKRTG…YLFLTQEGNW (127 aa). The a 1,2-diacyl-sn-glycero-3-phospho-(1D-myo-inositol-3-phosphate) site is built by Arg106, Ser108, Lys132, and Arg154.

This sequence belongs to the sorting nexin family. As to quaternary structure, heterodimer; heterodimerizes with SNX7 or SNX30. Interacts with WWC1/KIBRA. Identified in a complex with WWC1/KIBRA and dynein components DYNLL1 and DYNC1I2. Interacts with BIN1.

It is found in the early endosome membrane. Its function is as follows. Involved in the regulation of endocytosis and in several stages of intracellular trafficking. Plays a role in recycling endocytosed transferrin receptor and prevent its degradation. Involved in autophagosome assembly by regulating trafficking and recycling of phospholipid scramblase ATG9A. The polypeptide is Sorting nexin-4 (Homo sapiens (Human)).